We begin with the raw amino-acid sequence, 184 residues long: Shikimate kinase (184 aa).

17–22 (GAGKTT) provides a ligand contact to ATP. Threonine 21 serves as a coordination point for Mg(2+). Residues aspartate 39, arginine 63, and glycine 85 each contribute to the substrate site. ATP is bound at residue arginine 123. Arginine 142 lines the substrate pocket.

This sequence belongs to the shikimate kinase family. Monomer. Mg(2+) is required as a cofactor.

The protein resides in the cytoplasm. The catalysed reaction is shikimate + ATP = 3-phosphoshikimate + ADP + H(+). It participates in metabolic intermediate biosynthesis; chorismate biosynthesis; chorismate from D-erythrose 4-phosphate and phosphoenolpyruvate: step 5/7. In terms of biological role, catalyzes the specific phosphorylation of the 3-hydroxyl group of shikimic acid using ATP as a cosubstrate. This is Shikimate kinase from Burkholderia thailandensis (strain ATCC 700388 / DSM 13276 / CCUG 48851 / CIP 106301 / E264).